A 1592-amino-acid chain; its full sequence is Probable serine/threonine-protein kinase DDB_G0293958 (1592 aa).

Residues 1 to 302 (MTGFEIFKKK…CLNYLKEKLI (302 aa)) enclose the Protein kinase 1 domain. ATP is bound by residues 2–10 (TGFEIFKKK) and K43. D158 acts as the Proton acceptor in catalysis. Disordered regions lie at residues 348 to 402 (INNN…NNNN), 455 to 526 (FNDI…SNYN), and 837 to 867 (KNNN…NDKS). The segment covering 349–402 (NNNNNNNNNNNNNNNNNNNNNNNNNNNNNNNNNNNNNNNNNNNNNNNNNNNNNN) has biased composition (low complexity). A coiled-coil region spans residues 461-518 (STTGEEEEEEKKDNLKRQNENNQIEQEDKGEKHLKETLNNNNNNNNNNNNNNNNNNNN). Residues 486-496 (QEDKGEKHLKE) show a composition bias toward basic and acidic residues. Low complexity-rich tracts occupy residues 499–526 (NNNN…SNYN) and 837–864 (KNNN…NNSN). The 251-residue stretch at 1342 to 1592 (LGTYNLIGDS…KELIECLNKL (251 aa)) folds into the Protein kinase 2 domain. ATP is bound by residues 1348-1356 (IGDSVFRNI) and K1376. Residue D1474 is the Proton acceptor of the active site.

It belongs to the protein kinase superfamily. Ser/Thr protein kinase family.

The enzyme catalyses L-seryl-[protein] + ATP = O-phospho-L-seryl-[protein] + ADP + H(+). The catalysed reaction is L-threonyl-[protein] + ATP = O-phospho-L-threonyl-[protein] + ADP + H(+). This Dictyostelium discoideum (Social amoeba) protein is Probable serine/threonine-protein kinase DDB_G0293958.